The sequence spans 197 residues: Peptide deformylase (197 aa).

The Fe cation site is built by Cys106 and His148. Residue Glu149 is part of the active site. Residue His152 participates in Fe cation binding.

The protein belongs to the polypeptide deformylase family. Fe(2+) is required as a cofactor.

The catalysed reaction is N-terminal N-formyl-L-methionyl-[peptide] + H2O = N-terminal L-methionyl-[peptide] + formate. In terms of biological role, removes the formyl group from the N-terminal Met of newly synthesized proteins. Requires at least a dipeptide for an efficient rate of reaction. N-terminal L-methionine is a prerequisite for activity but the enzyme has broad specificity at other positions. The polypeptide is Peptide deformylase (Mycobacterium ulcerans (strain Agy99)).